Consider the following 414-residue polypeptide: Particulate methane monooxygenase alpha subunit (414 aa).

Positions methionine 1–alanine 32 are cleaved as a signal peptide. Positions 33, 48, 72, 137, and 139 each coordinate Cu cation. Positions histidine 33–threonine 172 are cupredoxin domain used to construct soluble pmoB (spmoB). 2 helical membrane-spanning segments follow: residues glycine 186 to tryptophan 206 and valine 235 to asparagine 255. The tract at residues glutamine 265 to methionine 414 is cupredoxin domain used to construct soluble pmoB (spmoB).

In terms of assembly, m.capsulatus has two forms of methane monooxygenase, a soluble (sMMO) and a membrane-bound (particulate) type (pMMO). The particulate type is a nonamer composed of three alpha:beta:gamma heterotrimeric protomers assembled into a cylindrical structure; the beta and gamma subunits comprise the bulk of the membrane-spanning regions and the soluble regions are derived primarily from alpha subunits which form two antiparallel beta-barrel-like structures each. This assembly, also called pMMO hydroxylase (pMMO-H), is proposed to associate with methanol dehydrogenase (MDH), also designated as pMMO-R, to form the pMMO-C complex which seems to have greater methane monooxygenase activity. The cofactor is Cu(2+).

It localises to the membrane. It carries out the reaction methane + a quinol + O2 = methanol + a quinone + H2O. Methane monooxygenase is responsible for the initial oxygenation of methane to methanol in methanotrophs. At least in vitro, specific quinols can replace NADH as reductants. In Methylococcus capsulatus (strain ATCC 33009 / NCIMB 11132 / Bath), this protein is Particulate methane monooxygenase alpha subunit (pmoB1).